The chain runs to 117 residues: Large ribosomal subunit protein bL20 (117 aa).

This sequence belongs to the bacterial ribosomal protein bL20 family.

In terms of biological role, binds directly to 23S ribosomal RNA and is necessary for the in vitro assembly process of the 50S ribosomal subunit. It is not involved in the protein synthesizing functions of that subunit. The protein is Large ribosomal subunit protein bL20 of Limosilactobacillus fermentum (strain NBRC 3956 / LMG 18251) (Lactobacillus fermentum).